The sequence spans 136 residues: Large ribosomal subunit protein uL16 (136 aa).

This sequence belongs to the universal ribosomal protein uL16 family. As to quaternary structure, part of the 50S ribosomal subunit.

Binds 23S rRNA and is also seen to make contacts with the A and possibly P site tRNAs. The polypeptide is Large ribosomal subunit protein uL16 (Wigglesworthia glossinidia brevipalpis).